Here is a 505-residue protein sequence, read N- to C-terminus: Formate--tetrahydrofolate ligase (505 aa).

It belongs to the formate--tetrahydrofolate ligase family.

It carries out the reaction (6S)-5,6,7,8-tetrahydrofolate + formate + ATP = (6R)-10-formyltetrahydrofolate + ADP + phosphate. It participates in one-carbon metabolism; tetrahydrofolate interconversion. In Bifidobacterium longum (strain NCC 2705), this protein is Formate--tetrahydrofolate ligase (fhs).